Consider the following 66-residue polypeptide: Large ribosomal subunit protein bL33c (66 aa).

The protein belongs to the bacterial ribosomal protein bL33 family.

The protein localises to the plastid. It is found in the chloroplast. In Chloranthus spicatus (Chulantree), this protein is Large ribosomal subunit protein bL33c.